A 157-amino-acid polypeptide reads, in one-letter code: Small ribosomal subunit protein uS7 (157 aa).

It belongs to the universal ribosomal protein uS7 family. In terms of assembly, part of the 30S ribosomal subunit. Contacts proteins S9 and S11.

One of the primary rRNA binding proteins, it binds directly to 16S rRNA where it nucleates assembly of the head domain of the 30S subunit. Is located at the subunit interface close to the decoding center, probably blocks exit of the E-site tRNA. The chain is Small ribosomal subunit protein uS7 from Borreliella burgdorferi (strain ATCC 35210 / DSM 4680 / CIP 102532 / B31) (Borrelia burgdorferi).